We begin with the raw amino-acid sequence, 570 residues long: MFAKAFRVKSNTAIKGSDRRKLRADVTAAFPALGTDQISELIPGKEELNVVKLYVHKGDSVTVYTSGGNPILFELEKNLYPTVYTLWAYPDILPTFITWPLVLEKLVGGADLMLPGVVVPPTGLPQVQQGDLCAIALVGNRAPVAIGVAAMSTAQMLASGLKGKGVSVLHTYQDHLWRSGDKSSPPAIAPLDPTDSCEEKVHLGLQGNLKSLTLDGEEENGQVPLREASEDTSSRAPSQDSLDGKPLQEQMDDLLLRCFLHALKSRVKKADLPLLTSTLLGSHMFSCCPEGQQLDIKKSSYKKLSKFLQHMQQEQIVQVKELSKGVESIVAVDWRHPRITSFVIPEPSLTSQTVQEVSREQPYLPPDIKSLYCVPANMTQLFLESGHKKGSTLEGSEVRKIITDYAKRNRLVDADNRNLVKLDPILCDCILEKNEQHLVTKLPWDCLLTRCLKNMQPAYQVTFPGQEPILKKGKLCPIDITLALKTYNKKVTVVRNLETYGLDPCSVAAILQQRCQASTIVSPAPGAKDSLQVQVQGNQIHHLGQLLLEEYRLPGKYIQGLEKAPKPGKK.

Met1 bears the N-acetylmethionine mark. Positions 93–173 constitute a PUA domain; that stretch reads LPTFITWPLV…KGVSVLHTYQ (81 aa). The interval 224-245 is disordered; it reads PLREASEDTSSRAPSQDSLDGK. Residues Ser238, Ser241, and Ser348 each carry the phosphoserine modification. The 85-residue stretch at 370 to 454 folds into the SWIB/MDM2 domain; sequence SLYCVPANMT…DCLLTRCLKN (85 aa). The SUI1 domain maps to 478–548; the sequence is IDITLALKTY…QIHHLGQLLL (71 aa).

Belongs to the eIF2D family.

The protein resides in the cytoplasm. Translation initiation factor that is able to deliver tRNA to the P-site of the eukaryotic ribosome in a GTP-independent manner. The binding of Met-tRNA(I) occurs after the AUG codon finds its position in the P-site of 40S ribosomes, the situation that takes place during initiation complex formation on some specific RNAs. Its activity in tRNA binding with 40S subunits does not require the presence of the aminoacyl moiety. Possesses the unique ability to deliver non-Met (elongator) tRNAs into the P-site of the 40S subunit. In addition to its role in initiation, can promote release of deacylated tRNA and mRNA from recycled 40S subunits following ABCE1-mediated dissociation of post-termination ribosomal complexes into subunits. The polypeptide is Eukaryotic translation initiation factor 2D (Eif2d) (Mus musculus (Mouse)).